The sequence spans 490 residues: Myocilin (490 aa).

A signal peptide spans 1–18; sequence MPAVQLLLLACLLGGVGA. Positions 51–170 form a coiled coil; it reads GQAMLAIQEL…QEVASLRRGQ (120 aa). Positions 152–186 are disordered; it reads LARRLESSSQEVASLRRGQCPQAHSSSQDVPSGSR. Residues 173-182 are compositionally biased toward polar residues; it reads QAHSSSQDVP. The Olfactomedin-like domain occupies 230 to 489; the sequence is GCGELVWVGE…MVSYDIKLSR (260 aa). A disulfide bond links C231 and C419. Ca(2+)-binding residues include D366, N414, A415, I463, and D464. A Microbody targeting signal motif is present at residues 488 to 490; sequence SRL.

As to quaternary structure, homodimer (via N-terminus). Can also form higher oligomers. Interacts with OLFM3, FN1, NRCAM, GLDN and NFASC. Interacts (via N-terminus) with MYL2. Interacts with SFRP1, FRZB, FZD7, FZD10, FZD1 and WIF1; regulates Wnt signaling. Interacts with SNTA1; regulates muscle hypertrophy. Interacts with ERBB2 and ERBB3; activates ERBB2-ERBB3 signaling pathway. Interacts with SNCG; affects its secretion and its aggregation. In terms of processing, palmitoylated. Undergoes a calcium-dependent proteolytic cleavage at Gln-212 by CAPN2 in the endoplasmic reticulum. The result is the production of two fragments, one of 35 kDa containing the C-terminal olfactomedin-like domain, and another of 20 kDa containing the N-terminal leucine zipper-like domain. Post-translationally, glycosylated. As to expression, the myocilin 35 kDa fragment is detected in iris and ciliary body.

It is found in the secreted. It localises to the golgi apparatus. Its subcellular location is the cytoplasmic vesicle. The protein localises to the extracellular space. The protein resides in the extracellular matrix. It is found in the extracellular exosome. It localises to the mitochondrion. Its subcellular location is the mitochondrion intermembrane space. The protein localises to the mitochondrion inner membrane. The protein resides in the mitochondrion outer membrane. It is found in the rough endoplasmic reticulum. It localises to the cell projection. Its subcellular location is the cilium. The protein localises to the endoplasmic reticulum. Its function is as follows. Secreted glycoprotein regulating the activation of different signaling pathways in adjacent cells to control different processes including cell adhesion, cell-matrix adhesion, cytoskeleton organization and cell migration. Promotes substrate adhesion, spreading and formation of focal contacts. Negatively regulates cell-matrix adhesion and stress fiber assembly through Rho protein signal transduction. Modulates the organization of actin cytoskeleton by stimulating the formation of stress fibers through interactions with components of Wnt signaling pathways. Promotes cell migration through activation of PTK2 and the downstream phosphatidylinositol 3-kinase signaling. Plays a role in bone formation and promotes osteoblast differentiation in a dose-dependent manner through mitogen-activated protein kinase signaling. Mediates myelination in the peripheral nervous system through ERBB2/ERBB3 signaling. Plays a role as a regulator of muscle hypertrophy through the components of dystrophin-associated protein complex. Involved in positive regulation of mitochondrial depolarization. Plays a role in neurite outgrowth. May participate in the obstruction of fluid outflow in the trabecular meshwork. This Bos taurus (Bovine) protein is Myocilin (MYOC).